A 371-amino-acid polypeptide reads, in one-letter code: Cytochrome b (371 aa).

4 consecutive transmembrane segments (helical) span residues 25 to 45 (FGSMLLTCSALQVMTGFFLAI), 69 to 90 (WIMQNLHAIGASMFFICIYIHI), 105 to 125 (WLSGTTLLIILMATAFFGYVL), and 170 to 190 (FFALHFILPFAIISMSSIHIM). The heme b site is built by histidine 75 and histidine 89. Residues histidine 174 and histidine 188 each contribute to the heme b site. Histidine 193 provides a ligand contact to a ubiquinone. 4 helical membrane passes run 218–238 (HKDILMLTIMITTMFTIMSFS), 280–300 (LGGTVALVLSVAILMTMPFTH), 312–332 (IMQLVFWTLIATFITITWAAT), and 339–358 (FTIIGQTTSFLYFSFFIMNP).

Belongs to the cytochrome b family. As to quaternary structure, the cytochrome bc1 complex contains 3 respiratory subunits (MT-CYB, CYC1 and UQCRFS1), 2 core proteins (UQCRC1 and UQCRC2) and probably 6 low-molecular weight proteins. Heme b serves as cofactor.

It is found in the mitochondrion inner membrane. In terms of biological role, component of the ubiquinol-cytochrome c reductase complex (complex III or cytochrome b-c1 complex) that is part of the mitochondrial respiratory chain. The b-c1 complex mediates electron transfer from ubiquinol to cytochrome c. Contributes to the generation of a proton gradient across the mitochondrial membrane that is then used for ATP synthesis. In Coluber constrictor (Eastern racer), this protein is Cytochrome b (MT-CYB).